Reading from the N-terminus, the 55-residue chain is Large ribosomal subunit protein bL33 (55 aa).

The protein belongs to the bacterial ribosomal protein bL33 family.

The sequence is that of Large ribosomal subunit protein bL33 from Paraburkholderia phytofirmans (strain DSM 17436 / LMG 22146 / PsJN) (Burkholderia phytofirmans).